Reading from the N-terminus, the 407-residue chain is Probable tRNA sulfurtransferase (407 aa).

The THUMP domain occupies 61-165; that stretch reads NEITYRLSKI…LDAIYMYEEV (105 aa). ATP-binding positions include 183 to 184, 208 to 209, R265, G287, and Q296; these read ML and HF.

This sequence belongs to the ThiI family.

Its subcellular location is the cytoplasm. It catalyses the reaction [ThiI sulfur-carrier protein]-S-sulfanyl-L-cysteine + a uridine in tRNA + 2 reduced [2Fe-2S]-[ferredoxin] + ATP + H(+) = [ThiI sulfur-carrier protein]-L-cysteine + a 4-thiouridine in tRNA + 2 oxidized [2Fe-2S]-[ferredoxin] + AMP + diphosphate. It carries out the reaction [ThiS sulfur-carrier protein]-C-terminal Gly-Gly-AMP + S-sulfanyl-L-cysteinyl-[cysteine desulfurase] + AH2 = [ThiS sulfur-carrier protein]-C-terminal-Gly-aminoethanethioate + L-cysteinyl-[cysteine desulfurase] + A + AMP + 2 H(+). Its pathway is cofactor biosynthesis; thiamine diphosphate biosynthesis. Its function is as follows. Catalyzes the ATP-dependent transfer of a sulfur to tRNA to produce 4-thiouridine in position 8 of tRNAs, which functions as a near-UV photosensor. Also catalyzes the transfer of sulfur to the sulfur carrier protein ThiS, forming ThiS-thiocarboxylate. This is a step in the synthesis of thiazole, in the thiamine biosynthesis pathway. The sulfur is donated as persulfide by IscS. The sequence is that of Probable tRNA sulfurtransferase from Staphylococcus aureus (strain Mu3 / ATCC 700698).